Consider the following 459-residue polypeptide: Bifunctional protein GlmU (459 aa).

A pyrophosphorylase region spans residues 1 to 230; the sequence is MSNRFAVILA…FDETLGVNDR (230 aa). UDP-N-acetyl-alpha-D-glucosamine is bound by residues 9–12, K23, Q73, and 78–79; these read LAAG and GT. Residue D103 participates in Mg(2+) binding. The UDP-N-acetyl-alpha-D-glucosamine site is built by G140, E155, N170, and N228. Mg(2+) is bound at residue N228. Positions 231–251 are linker; the sequence is VALSQAEIIMKNRINRKNMVN. Residues 252–459 form an N-acetyltransferase region; sequence GVTIIDPSNT…VDQLLNKKKS (208 aa). R333 and K351 together coordinate UDP-N-acetyl-alpha-D-glucosamine. H363 acts as the Proton acceptor in catalysis. 2 residues coordinate UDP-N-acetyl-alpha-D-glucosamine: Y366 and N377. Acetyl-CoA contacts are provided by residues 386 to 387, A423, and R440; that span reads NY.

The protein in the N-terminal section; belongs to the N-acetylglucosamine-1-phosphate uridyltransferase family. In the C-terminal section; belongs to the transferase hexapeptide repeat family. Homotrimer. The cofactor is Mg(2+).

It is found in the cytoplasm. The catalysed reaction is alpha-D-glucosamine 1-phosphate + acetyl-CoA = N-acetyl-alpha-D-glucosamine 1-phosphate + CoA + H(+). The enzyme catalyses N-acetyl-alpha-D-glucosamine 1-phosphate + UTP + H(+) = UDP-N-acetyl-alpha-D-glucosamine + diphosphate. Its pathway is nucleotide-sugar biosynthesis; UDP-N-acetyl-alpha-D-glucosamine biosynthesis; N-acetyl-alpha-D-glucosamine 1-phosphate from alpha-D-glucosamine 6-phosphate (route II): step 2/2. The protein operates within nucleotide-sugar biosynthesis; UDP-N-acetyl-alpha-D-glucosamine biosynthesis; UDP-N-acetyl-alpha-D-glucosamine from N-acetyl-alpha-D-glucosamine 1-phosphate: step 1/1. It functions in the pathway bacterial outer membrane biogenesis; LPS lipid A biosynthesis. In terms of biological role, catalyzes the last two sequential reactions in the de novo biosynthetic pathway for UDP-N-acetylglucosamine (UDP-GlcNAc). The C-terminal domain catalyzes the transfer of acetyl group from acetyl coenzyme A to glucosamine-1-phosphate (GlcN-1-P) to produce N-acetylglucosamine-1-phosphate (GlcNAc-1-P), which is converted into UDP-GlcNAc by the transfer of uridine 5-monophosphate (from uridine 5-triphosphate), a reaction catalyzed by the N-terminal domain. The chain is Bifunctional protein GlmU from Bacillus cereus (strain AH187).